The primary structure comprises 283 residues: 2-dehydro-3-deoxyphosphooctonate aldolase (283 aa).

This sequence belongs to the KdsA family.

The protein localises to the cytoplasm. The catalysed reaction is D-arabinose 5-phosphate + phosphoenolpyruvate + H2O = 3-deoxy-alpha-D-manno-2-octulosonate-8-phosphate + phosphate. Its pathway is carbohydrate biosynthesis; 3-deoxy-D-manno-octulosonate biosynthesis; 3-deoxy-D-manno-octulosonate from D-ribulose 5-phosphate: step 2/3. It participates in bacterial outer membrane biogenesis; lipopolysaccharide biosynthesis. This is 2-dehydro-3-deoxyphosphooctonate aldolase from Laribacter hongkongensis (strain HLHK9).